Reading from the N-terminus, the 454-residue chain is uncharacterized protein (454 aa).

The HNH domain occupies 364–405 (CSRPGCDAPAYHSEVHHVTPWTTTHRTDINDLTLACGPDNRL).

This sequence belongs to the Rv1128c/1148c/1588c/1702c/1945/3466 family.

This is an uncharacterized protein from Mycobacterium tuberculosis (strain ATCC 25618 / H37Rv).